Consider the following 140-residue polypeptide: Nucleoside diphosphate kinase (140 aa).

ATP contacts are provided by K11, F59, R87, T93, R104, and N114. H117 (pros-phosphohistidine intermediate) is an active-site residue.

The protein belongs to the NDK family. In terms of assembly, homotetramer. Requires Mg(2+) as cofactor.

The protein resides in the cytoplasm. The catalysed reaction is a 2'-deoxyribonucleoside 5'-diphosphate + ATP = a 2'-deoxyribonucleoside 5'-triphosphate + ADP. It catalyses the reaction a ribonucleoside 5'-diphosphate + ATP = a ribonucleoside 5'-triphosphate + ADP. Major role in the synthesis of nucleoside triphosphates other than ATP. The ATP gamma phosphate is transferred to the NDP beta phosphate via a ping-pong mechanism, using a phosphorylated active-site intermediate. This Rhizobium etli (strain CIAT 652) protein is Nucleoside diphosphate kinase.